The primary structure comprises 241 residues: Ribulose-phosphate 3-epimerase 2 (241 aa).

Residue S21 participates in substrate binding. Positions 46, 48, and 79 each coordinate a divalent metal cation. Catalysis depends on D48, which acts as the Proton acceptor. Residues H79, 155 to 158 (GFGG), 192 to 194 (DGG), and 214 to 215 (GS) each bind substrate. Residue D192 participates in a divalent metal cation binding. D192 serves as the catalytic Proton donor.

This sequence belongs to the ribulose-phosphate 3-epimerase family. It depends on a divalent metal cation as a cofactor.

The enzyme catalyses D-ribulose 5-phosphate = D-xylulose 5-phosphate. It functions in the pathway carbohydrate degradation. Functionally, catalyzes the reversible epimerization of D-ribulose 5-phosphate to D-xylulose 5-phosphate. The polypeptide is Ribulose-phosphate 3-epimerase 2 (Cupriavidus necator (strain ATCC 17699 / DSM 428 / KCTC 22496 / NCIMB 10442 / H16 / Stanier 337) (Ralstonia eutropha)).